A 338-amino-acid chain; its full sequence is CRISPR-associated endonuclease Cas1 (338 aa).

Glu165, His230, and Glu245 together coordinate Mn(2+).

It belongs to the CRISPR-associated endonuclease Cas1 family. Homodimer, forms a heterotetramer with a Cas2 homodimer. Requires Mg(2+) as cofactor. Mn(2+) serves as cofactor.

In terms of biological role, CRISPR (clustered regularly interspaced short palindromic repeat), is an adaptive immune system that provides protection against mobile genetic elements (viruses, transposable elements and conjugative plasmids). CRISPR clusters contain spacers, sequences complementary to antecedent mobile elements, and target invading nucleic acids. CRISPR clusters are transcribed and processed into CRISPR RNA (crRNA). Acts as a dsDNA endonuclease. Involved in the integration of spacer DNA into the CRISPR cassette. In Fusobacterium nucleatum subsp. nucleatum (strain ATCC 25586 / DSM 15643 / BCRC 10681 / CIP 101130 / JCM 8532 / KCTC 2640 / LMG 13131 / VPI 4355), this protein is CRISPR-associated endonuclease Cas1.